Consider the following 92-residue polypeptide: Large ribosomal subunit protein eL43 (92 aa).

The C4-type zinc-finger motif lies at 39–60 (CQFCGKDAMKRQAVGIWGCKSC).

This sequence belongs to the eukaryotic ribosomal protein eL43 family.

The sequence is that of Large ribosomal subunit protein eL43 (RPL37A) from Cryptochiton stelleri (Giant gumboot chiton).